A 423-amino-acid polypeptide reads, in one-letter code: D-tagatose-1,6-bisphosphate aldolase subunit GatZ (423 aa).

Belongs to the GatZ/KbaZ family. GatZ subfamily. As to quaternary structure, forms a complex with GatY.

Its pathway is carbohydrate metabolism; D-tagatose 6-phosphate degradation; D-glyceraldehyde 3-phosphate and glycerone phosphate from D-tagatose 6-phosphate: step 2/2. Functionally, component of the tagatose-1,6-bisphosphate aldolase GatYZ that is required for full activity and stability of the Y subunit. Could have a chaperone-like function for the proper and stable folding of GatY. When expressed alone, GatZ does not show any aldolase activity. Is involved in the catabolism of galactitol. This chain is D-tagatose-1,6-bisphosphate aldolase subunit GatZ, found in Salmonella typhimurium (strain LT2 / SGSC1412 / ATCC 700720).